We begin with the raw amino-acid sequence, 551 residues long: Palmdelphin (551 aa).

Residue M1 is modified to N-acetylmethionine. Residues 12–106 (QAITDKRKIQ…LQISANEEAI (95 aa)) are a coiled coil. A Glycyl lysine isopeptide (Lys-Gly) (interchain with G-Cter in SUMO2) cross-link involves residue K125. At S135 the chain carries Phosphoserine. A Glycyl lysine isopeptide (Lys-Gly) (interchain with G-Cter in SUMO1); alternate cross-link involves residue K178. Residue K178 forms a Glycyl lysine isopeptide (Lys-Gly) (interchain with G-Cter in SUMO2); alternate linkage. Residues 247–258 (ERNSKSPTEYHE) show a composition bias toward basic and acidic residues. Residues 247–266 (ERNSKSPTEYHEPVYANPFC) are disordered. At T270 the chain carries Phosphothreonine. Disordered stretches follow at residues 294–390 (LGNH…TCQE) and 451–533 (AEDN…GTED). S321 and S349 each carry phosphoserine. Over residues 341–353 (HTQQKRMASPWEE) the composition is skewed to polar residues. Basic and acidic residues predominate over residues 354–365 (SSNRQNEHEVSP). 7 positions are modified to phosphoserine: S370, S375, S384, S385, S498, S515, and S520.

The protein belongs to the paralemmin family. In terms of assembly, interacts with GLUL. In terms of processing, phosphorylated. In terms of tissue distribution, ubiquitous. Expressed at highest levels in the heart and lung.

The protein resides in the cytoplasm. The protein localises to the cell projection. It is found in the dendrite. Its subcellular location is the dendritic spine. The polypeptide is Palmdelphin (Palmd) (Mus musculus (Mouse)).